We begin with the raw amino-acid sequence, 517 residues long: Crotonobetaine/carnitine--CoA ligase (517 aa).

The protein belongs to the ATP-dependent AMP-binding enzyme family.

It carries out the reaction 4-(trimethylamino)butanoate + ATP + CoA = 4-(trimethylamino)butanoyl-CoA + AMP + diphosphate. The enzyme catalyses crotonobetaine + ATP + CoA = crotonobetainyl-CoA + AMP + diphosphate. It catalyses the reaction (R)-carnitine + ATP + CoA = (R)-carnitinyl-CoA + AMP + diphosphate. The protein operates within amine and polyamine metabolism; carnitine metabolism. Its function is as follows. Catalyzes the transfer of CoA to carnitine, generating the initial carnitinyl-CoA needed for the CaiB reaction cycle. Also has activity toward crotonobetaine and gamma-butyrobetaine. The polypeptide is Crotonobetaine/carnitine--CoA ligase (Salmonella agona (strain SL483)).